Here is a 407-residue protein sequence, read N- to C-terminus: D-inositol 3-phosphate glycosyltransferase (407 aa).

His-2 provides a ligand contact to 1D-myo-inositol 3-phosphate. Residues 8 to 9 (QP) and Gly-16 each bind UDP-N-acetyl-alpha-D-glucosamine. 1D-myo-inositol 3-phosphate contacts are provided by residues 13–18 (DAGGLN), Arg-71, Tyr-104, Thr-128, and Arg-148. UDP-N-acetyl-alpha-D-glucosamine contacts are provided by Arg-222 and Lys-227. Tyr-297, Arg-298, and Ala-300 together coordinate Mg(2+). UDP-N-acetyl-alpha-D-glucosamine contacts are provided by Glu-310 and Glu-318. Thr-324 is a binding site for Mg(2+).

Belongs to the glycosyltransferase group 1 family. MshA subfamily. Homodimer.

It carries out the reaction 1D-myo-inositol 3-phosphate + UDP-N-acetyl-alpha-D-glucosamine = 1D-myo-inositol 2-acetamido-2-deoxy-alpha-D-glucopyranoside 3-phosphate + UDP + H(+). Functionally, catalyzes the transfer of a N-acetyl-glucosamine moiety to 1D-myo-inositol 3-phosphate to produce 1D-myo-inositol 2-acetamido-2-deoxy-glucopyranoside 3-phosphate in the mycothiol biosynthesis pathway. In Frankia alni (strain DSM 45986 / CECT 9034 / ACN14a), this protein is D-inositol 3-phosphate glycosyltransferase.